Reading from the N-terminus, the 342-residue chain is Cyclin-dependent kinase-like 4 (342 aa).

Residues 4 to 286 (YEKLAKIGEG…CAQLLDSAYF (283 aa)) form the Protein kinase domain. ATP contacts are provided by residues 10-18 (IGEGSYGVV) and Lys33. Positions 45–51 (RKIALRE) match the [NKR]KIAxRE motif. The active-site Proton acceptor is the Asp126. Positions 295 to 328 (KRKARSEGRSRRRQQNQLLPLIPGSHISPTPDGR) are disordered.

The protein belongs to the protein kinase superfamily. CMGC Ser/Thr protein kinase family. CDC2/CDKX subfamily.

The protein resides in the cytoplasm. It carries out the reaction L-seryl-[protein] + ATP = O-phospho-L-seryl-[protein] + ADP + H(+). The catalysed reaction is L-threonyl-[protein] + ATP = O-phospho-L-threonyl-[protein] + ADP + H(+). The chain is Cyclin-dependent kinase-like 4 (Cdkl4) from Mus musculus (Mouse).